Consider the following 162-residue polypeptide: Ribonuclease H (162 aa).

The RNase H type-1 domain maps to 1–141 (MKRIEIFTDG…ADALARAGMA (141 aa)). Mg(2+) contacts are provided by Asp-9, Glu-47, Asp-69, and Asp-133. Residues 139–162 (GMAPFKKKKGGDTASSEEGSARRR) are disordered.

It belongs to the RNase H family. As to quaternary structure, monomer. Requires Mg(2+) as cofactor.

It localises to the cytoplasm. It carries out the reaction Endonucleolytic cleavage to 5'-phosphomonoester.. Functionally, endonuclease that specifically degrades the RNA of RNA-DNA hybrids. This is Ribonuclease H from Chelativorans sp. (strain BNC1).